The chain runs to 319 residues: Non-homologous end joining protein Ku (319 aa).

Residues 10–188 form the Ku domain; the sequence is ISFGLVTVPI…PQGIELSEDE (179 aa). A disordered region spans residues 252 to 319; that stretch reads QSVAKAKASR…TTPKKPRRSA (68 aa). Residues 260 to 274 are compositionally biased toward basic and acidic residues; the sequence is SRGESGEADVHELPR. Basic residues predominate over residues 305 to 319; sequence TAAKKTTPKKPRRSA.

It belongs to the prokaryotic Ku family. Homodimer. Interacts with LigD.

Its function is as follows. With LigD forms a non-homologous end joining (NHEJ) DNA repair enzyme, which repairs dsDNA breaks with reduced fidelity. Binds linear dsDNA with 5'- and 3'- overhangs but not closed circular dsDNA nor ssDNA. Recruits and stimulates the ligase activity of LigD. This chain is Non-homologous end joining protein Ku, found in Streptomyces avermitilis (strain ATCC 31267 / DSM 46492 / JCM 5070 / NBRC 14893 / NCIMB 12804 / NRRL 8165 / MA-4680).